Consider the following 277-residue polypeptide: Phosphate import ATP-binding protein PstB (277 aa).

Residues 31–272 form the ABC transporter domain; the sequence is IEVPGLSLYY…PAKKQTEDYI (242 aa). An ATP-binding site is contributed by 63–70; it reads GPSGCGKS.

It belongs to the ABC transporter superfamily. Phosphate importer (TC 3.A.1.7) family. As to quaternary structure, the complex is composed of two ATP-binding proteins (PstB), two transmembrane proteins (PstC and PstA) and a solute-binding protein (PstS).

It localises to the cell inner membrane. The enzyme catalyses phosphate(out) + ATP + H2O = ADP + 2 phosphate(in) + H(+). In terms of biological role, part of the ABC transporter complex PstSACB involved in phosphate import. Responsible for energy coupling to the transport system. The polypeptide is Phosphate import ATP-binding protein PstB (Pseudomonas fluorescens (strain ATCC BAA-477 / NRRL B-23932 / Pf-5)).